The sequence spans 562 residues: MVIVVFDLLPRVGLKPRDYLLRIVLPALITSIVLILLGFMLFSGIILYIYLLLPIIILVSAIGYPYIALDSQKNKINERLHIFITKFGTLSITDLNRKDLLKILSEEREELGELAKESEKLYVLTDKWGRSLAEACRFLAQRTPSSEFADFLDRLAYALDSGEELKEFLIKEQDIVMDDYAAFYKRMLYSLDMYKELYVSAMTSIAFFLAFSILVPFLLPYNFVFMATIALFAFFAVELLIVVVIRNRLPFDRLWHTGEKPTETDIKLRKWLIISVILVVILLPFLLWAKYIVGLSPFSQMPYMILVALGFTPLAIGGFVALKEEEKVKRKEFVFPDFLRSLGDSVSAKGGGMVSSLEYLSNHDFGPLTHDIKRLYKRLALGIDSNKSWRLFGFDSCSYLIQLFSDIFSRCIYFGGDPKTAAEIISKNFRKIVQLRKSKYQNIQQFVGVVYGLGGGLALALFASLGVAKMINDLYSSLSIPETVIHILNIAPISNVDVVEYIIFGSLIVYSIISAILIKIMDGGHKFVSLLHFVAILWICAIVAYITKLIVSQVLGVSVPLY.

Helical transmembrane passes span 32–52, 53–73, 199–219, 225–245, 273–293, 302–322, 446–466, 498–518, and 527–547; these read IVLI…IYLL, LPII…DSQK, VSAM…PFLL, FMAT…VVVI, IISV…KYIV, PYMI…FVAL, FVGV…ASLG, VVEY…AILI, and FVSL…AYIT.

The protein to M.voltae FlaJ. This sequence to M.jannaschii MJ1286.

The protein localises to the cell membrane. It is found in the archaeal flagellum. This Methanocaldococcus jannaschii (strain ATCC 43067 / DSM 2661 / JAL-1 / JCM 10045 / NBRC 100440) (Methanococcus jannaschii) protein is Flagella accessory protein J (flaJ).